Here is a 131-residue protein sequence, read N- to C-terminus: Small ribosomal subunit protein uS8 (131 aa).

The protein belongs to the universal ribosomal protein uS8 family. As to quaternary structure, part of the 30S ribosomal subunit. Contacts proteins S5 and S12.

One of the primary rRNA binding proteins, it binds directly to 16S rRNA central domain where it helps coordinate assembly of the platform of the 30S subunit. The polypeptide is Small ribosomal subunit protein uS8 (Phocaeicola vulgatus (strain ATCC 8482 / DSM 1447 / JCM 5826 / CCUG 4940 / NBRC 14291 / NCTC 11154) (Bacteroides vulgatus)).